Reading from the N-terminus, the 160-residue chain is SsrA-binding protein (160 aa).

Belongs to the SmpB family.

The protein localises to the cytoplasm. Functionally, required for rescue of stalled ribosomes mediated by trans-translation. Binds to transfer-messenger RNA (tmRNA), required for stable association of tmRNA with ribosomes. tmRNA and SmpB together mimic tRNA shape, replacing the anticodon stem-loop with SmpB. tmRNA is encoded by the ssrA gene; the 2 termini fold to resemble tRNA(Ala) and it encodes a 'tag peptide', a short internal open reading frame. During trans-translation Ala-aminoacylated tmRNA acts like a tRNA, entering the A-site of stalled ribosomes, displacing the stalled mRNA. The ribosome then switches to translate the ORF on the tmRNA; the nascent peptide is terminated with the 'tag peptide' encoded by the tmRNA and targeted for degradation. The ribosome is freed to recommence translation, which seems to be the essential function of trans-translation. This chain is SsrA-binding protein, found in Pectobacterium atrosepticum (strain SCRI 1043 / ATCC BAA-672) (Erwinia carotovora subsp. atroseptica).